The primary structure comprises 99 residues: Plastocyanin (99 aa).

In terms of domain architecture, Plastocyanin-like spans 1 to 99 (VEVLLGASDG…AGMVGQVTVN (99 aa)). H37, C84, H87, and M92 together coordinate Cu cation.

The protein belongs to the plastocyanin family. Cu(2+) is required as a cofactor.

It localises to the plastid. Its subcellular location is the chloroplast thylakoid membrane. In terms of biological role, participates in electron transfer between P700 and the cytochrome b6-f complex in photosystem I. The sequence is that of Plastocyanin (PETE) from Vicia faba (Broad bean).